Consider the following 404-residue polypeptide: S-adenosylmethionine synthase (404 aa).

Residues 1–13 show a composition bias toward polar residues; that stretch reads MSQSRYFFTSESV. Positions 1 to 21 are disordered; the sequence is MSQSRYFFTSESVSEGHPDKV. His-17 is an ATP binding site. Residue Asp-19 participates in Mg(2+) binding. Glu-45 lines the K(+) pocket. L-methionine-binding residues include Glu-58 and Gln-101. Residues 101 to 111 are flexible loop; it reads QSPDINRGVDR. ATP is bound by residues 172–174, 245–246, Asp-254, 260–261, Ala-277, and Lys-281; these read DAK, RF, and RK. Asp-254 is a binding site for L-methionine. Residue Lys-285 coordinates L-methionine.

It belongs to the AdoMet synthase family. Homotetramer; dimer of dimers. Requires Mg(2+) as cofactor. The cofactor is K(+).

Its subcellular location is the cytoplasm. The catalysed reaction is L-methionine + ATP + H2O = S-adenosyl-L-methionine + phosphate + diphosphate. It functions in the pathway amino-acid biosynthesis; S-adenosyl-L-methionine biosynthesis; S-adenosyl-L-methionine from L-methionine: step 1/1. Functionally, catalyzes the formation of S-adenosylmethionine (AdoMet) from methionine and ATP. The overall synthetic reaction is composed of two sequential steps, AdoMet formation and the subsequent tripolyphosphate hydrolysis which occurs prior to release of AdoMet from the enzyme. This chain is S-adenosylmethionine synthase, found in Chlorobium phaeobacteroides (strain DSM 266 / SMG 266 / 2430).